We begin with the raw amino-acid sequence, 399 residues long: Argininosuccinate synthase (399 aa).

ATP is bound by residues 10–18 (AYSGGVDTS) and Ala38. Tyr89 is an L-citrulline binding site. Gly119 is an ATP binding site. L-aspartate contacts are provided by Thr121, Asn125, and Asp126. An L-citrulline-binding site is contributed by Asn125. Arg129, Ser177, Ser186, Glu262, and Tyr274 together coordinate L-citrulline.

Belongs to the argininosuccinate synthase family. Type 1 subfamily. In terms of assembly, homotetramer.

It localises to the cytoplasm. It carries out the reaction L-citrulline + L-aspartate + ATP = 2-(N(omega)-L-arginino)succinate + AMP + diphosphate + H(+). It functions in the pathway amino-acid biosynthesis; L-arginine biosynthesis; L-arginine from L-ornithine and carbamoyl phosphate: step 2/3. This Rippkaea orientalis (strain PCC 8801 / RF-1) (Cyanothece sp. (strain PCC 8801)) protein is Argininosuccinate synthase.